We begin with the raw amino-acid sequence, 342 residues long: Ribosomal RNA small subunit methyltransferase C (342 aa).

The protein belongs to the methyltransferase superfamily. RsmC family. Monomer.

It is found in the cytoplasm. The enzyme catalyses guanosine(1207) in 16S rRNA + S-adenosyl-L-methionine = N(2)-methylguanosine(1207) in 16S rRNA + S-adenosyl-L-homocysteine + H(+). Functionally, specifically methylates the guanine in position 1207 of 16S rRNA in the 30S particle. The polypeptide is Ribosomal RNA small subunit methyltransferase C (Salmonella paratyphi A (strain ATCC 9150 / SARB42)).